The following is a 512-amino-acid chain: Maturase K (512 aa).

Belongs to the intron maturase 2 family. MatK subfamily.

It is found in the plastid. The protein resides in the chloroplast. Its function is as follows. Usually encoded in the trnK tRNA gene intron. Probably assists in splicing its own and other chloroplast group II introns. This is Maturase K from Oenothera glazioviana (Large-flowered evening primrose).